The chain runs to 593 residues: Proline--tRNA ligase (593 aa).

It belongs to the class-II aminoacyl-tRNA synthetase family. ProS type 1 subfamily. As to quaternary structure, homodimer.

The protein resides in the cytoplasm. The enzyme catalyses tRNA(Pro) + L-proline + ATP = L-prolyl-tRNA(Pro) + AMP + diphosphate. Functionally, catalyzes the attachment of proline to tRNA(Pro) in a two-step reaction: proline is first activated by ATP to form Pro-AMP and then transferred to the acceptor end of tRNA(Pro). As ProRS can inadvertently accommodate and process non-cognate amino acids such as alanine and cysteine, to avoid such errors it has two additional distinct editing activities against alanine. One activity is designated as 'pretransfer' editing and involves the tRNA(Pro)-independent hydrolysis of activated Ala-AMP. The other activity is designated 'posttransfer' editing and involves deacylation of mischarged Ala-tRNA(Pro). The misacylated Cys-tRNA(Pro) is not edited by ProRS. The chain is Proline--tRNA ligase from Synechococcus sp. (strain CC9902).